The following is an 85-amino-acid chain: Alpha-toxin Ac2 (85 aa).

The N-terminal stretch at M1–S19 is a signal peptide. One can recognise an LCN-type CS-alpha/beta domain in the interval K21–K83. 4 disulfides stabilise this stretch: C31/C82, C35/C55, C41/C65, and C45/C67. At K83 the chain carries Lysine amide.

It belongs to the long (4 C-C) scorpion toxin superfamily. Sodium channel inhibitor family. Alpha subfamily. In terms of tissue distribution, expressed by the venom gland.

It is found in the secreted. Alpha toxins bind voltage-independently at site-3 of sodium channels (Nav) and inhibit the inactivation of the activated channels, thereby blocking neuronal transmission. The sequence is that of Alpha-toxin Ac2 from Androctonus crassicauda (Arabian fat-tailed scorpion).